The sequence spans 288 residues: Homoserine kinase (288 aa).

An ATP-binding site is contributed by 79–89 (PPARGLGSSSA).

Belongs to the GHMP kinase family. Homoserine kinase subfamily.

It is found in the cytoplasm. It carries out the reaction L-homoserine + ATP = O-phospho-L-homoserine + ADP + H(+). It functions in the pathway amino-acid biosynthesis; L-threonine biosynthesis; L-threonine from L-aspartate: step 4/5. Its function is as follows. Catalyzes the ATP-dependent phosphorylation of L-homoserine to L-homoserine phosphate. The protein is Homoserine kinase of Listeria monocytogenes serotype 4b (strain CLIP80459).